The sequence spans 1453 residues: DNA mismatch repair protein Mlh3 (1453 aa).

Disordered stretches follow at residues 624–650 (EHSFKNYVRPGPTRAQETFGNRTRHSV) and 933–960 (GVIPTSDSATQDNSFNKNSKTHSNSNTT). Polar residues predominate over residues 935–944 (IPTSDSATQD). The segment covering 945–960 (NSFNKNSKTHSNSNTT) has biased composition (low complexity).

Belongs to the DNA mismatch repair MutL/HexB family. In terms of assembly, heterodimer of MLH1 and MLH3. Interacts with MTMR15/FAN1. As to expression, ubiquitous.

It is found in the nucleus. Its function is as follows. Probably involved in the repair of mismatches in DNA. The sequence is that of DNA mismatch repair protein Mlh3 (MLH3) from Homo sapiens (Human).